A 260-amino-acid chain; its full sequence is Sperm microtubule inner protein 6 (260 aa).

Belongs to the SPMIP6 family. Microtubule inner protein component of sperm flagellar doublet microtubules. Interacts with alpha-tubulin. Testis-specific, expressed exclusively in germ cells (at protein level). In terms of tissue distribution, testis-specific. As to expression, expressed in both lung and testis.

It is found in the cytoplasm. It localises to the cytoskeleton. The protein localises to the nucleus. The protein resides in the mitochondrion. Its subcellular location is the flagellum axoneme. Functionally, may participate in intramanchette transport and midpiece formation of the sperm tail. May play a potential role in somatic cell proliferation. This chain is Sperm microtubule inner protein 6 (SPMIP6), found in Mus musculus (Mouse).